Reading from the N-terminus, the 432-residue chain is Adenylosuccinate synthetase (432 aa).

GTP contacts are provided by residues 12-18 and 40-42; these read GDEGKGK and GHT. The active-site Proton acceptor is the Asp-13. 2 residues coordinate Mg(2+): Asp-13 and Gly-40. Residues 13–16, 38–41, Thr-132, Arg-146, Gln-226, Thr-241, and Arg-305 contribute to the IMP site; these read DEGK and NAGH. Catalysis depends on His-41, which acts as the Proton donor. 301 to 307 is a substrate binding site; the sequence is TVTGRKR. GTP-binding positions include Arg-307, 333-335, and 415-417; these read KLD and STS.

The protein belongs to the adenylosuccinate synthetase family. Homodimer. Mg(2+) serves as cofactor.

It localises to the cytoplasm. It carries out the reaction IMP + L-aspartate + GTP = N(6)-(1,2-dicarboxyethyl)-AMP + GDP + phosphate + 2 H(+). The protein operates within purine metabolism; AMP biosynthesis via de novo pathway; AMP from IMP: step 1/2. In terms of biological role, plays an important role in the de novo pathway of purine nucleotide biosynthesis. Catalyzes the first committed step in the biosynthesis of AMP from IMP. The chain is Adenylosuccinate synthetase from Sinorhizobium fredii (strain NBRC 101917 / NGR234).